The chain runs to 443 residues: Histidinol dehydrogenase (443 aa).

NAD(+)-binding residues include Tyr133, Gln191, and Asn214. Residues Ser240, Gln262, and His265 each contribute to the substrate site. 2 residues coordinate Zn(2+): Gln262 and His265. Catalysis depends on proton acceptor residues Glu329 and His330. Residues His330, Asp363, Glu417, and His422 each contribute to the substrate site. Residue Asp363 participates in Zn(2+) binding. Residue His422 coordinates Zn(2+).

The protein belongs to the histidinol dehydrogenase family. As to quaternary structure, homodimer. It depends on Zn(2+) as a cofactor.

The enzyme catalyses L-histidinol + 2 NAD(+) + H2O = L-histidine + 2 NADH + 3 H(+). It participates in amino-acid biosynthesis; L-histidine biosynthesis; L-histidine from 5-phospho-alpha-D-ribose 1-diphosphate: step 9/9. Functionally, catalyzes the sequential NAD-dependent oxidations of L-histidinol to L-histidinaldehyde and then to L-histidine. The polypeptide is Histidinol dehydrogenase (Blochmanniella pennsylvanica (strain BPEN)).